The chain runs to 444 residues: MSNEEFIRTQIFGTVFEITNRYTNLNPVGMGAFGLVCSATDTLTSQPVAIKKIMKPFSTSVLAKRTYRELKLLKHLRHENLICLEDIFLSPLEDIYFVTELQGTDLHRLLQTRPLEKQFVQYFLYQILRGLKYVHSAGVIHRDLKPSNILINENCDLKICDFGLARIQDPQMTGYVSTRYYRAPEIMLTWQKYNVEVDIWSAGCIFAEMIEGKPLFPGKDHVHQFSIITDLLGSPPKDVIDTICSENTLKFVTSLPHRDPVPFSSRFQNLEPDAIDLLEKMLVFDPKKRITAADALAHPYLSPYHDPTDEPIAEAKFDWNFNDADLPVDTWRVMMYSEILDFHQIGDPQINTNATFDDQVAAATVAAAEAASKQQQQQQHQTEEQTQQTIASTPPQAQVTPQQLESGANSNSNSNPSFSIGPDPANETLTNFANQADQYVSKFK.

Positions 22–301 constitute a Protein kinase domain; it reads YTNLNPVGMG…AADALAHPYL (280 aa). ATP-binding positions include 28–36 and Lys51; that span reads VGMGAFGLV. Asp143 serves as the catalytic Proton acceptor. A Phosphothreonine modification is found at Thr173. Residues 173-175 carry the TXY motif; it reads TGY. Tyr175 carries the post-translational modification Phosphotyrosine. A compositionally biased stretch (low complexity) spans 371-393; sequence ASKQQQQQQHQTEEQTQQTIAST. Residues 371 to 444 are disordered; it reads ASKQQQQQQH…QADQYVSKFK (74 aa). Positions 394-405 are enriched in polar residues; the sequence is PPQAQVTPQQLE. A compositionally biased stretch (low complexity) spans 406–419; that stretch reads SGANSNSNSNPSFS. A compositionally biased stretch (polar residues) spans 427–438; the sequence is ETLTNFANQADQ.

Belongs to the protein kinase superfamily. Ser/Thr protein kinase family. MAP kinase subfamily. HOG1 sub-subfamily. It depends on Mg(2+) as a cofactor. Dually phosphorylated on Thr-173 and Tyr-175, which activates the enzyme.

The protein resides in the cytoplasm. It is found in the nucleus. It catalyses the reaction L-seryl-[protein] + ATP = O-phospho-L-seryl-[protein] + ADP + H(+). The enzyme catalyses L-threonyl-[protein] + ATP = O-phospho-L-threonyl-[protein] + ADP + H(+). Activated by tyrosine and threonine phosphorylation. In terms of biological role, proline-directed serine/threonine-protein kinase involved in a signal transduction pathway that is activated by changes in the osmolarity of the extracellular environment. Controls osmotic regulation of transcription of target genes. The sequence is that of Mitogen-activated protein kinase HOG1 (HOG1) from Kluyveromyces lactis (strain ATCC 8585 / CBS 2359 / DSM 70799 / NBRC 1267 / NRRL Y-1140 / WM37) (Yeast).